Here is a 224-residue protein sequence, read N- to C-terminus: ATP phosphoribosyltransferase (224 aa).

It belongs to the ATP phosphoribosyltransferase family. Short subfamily. Heteromultimer composed of HisG and HisZ subunits.

It is found in the cytoplasm. It carries out the reaction 1-(5-phospho-beta-D-ribosyl)-ATP + diphosphate = 5-phospho-alpha-D-ribose 1-diphosphate + ATP. The protein operates within amino-acid biosynthesis; L-histidine biosynthesis; L-histidine from 5-phospho-alpha-D-ribose 1-diphosphate: step 1/9. In terms of biological role, catalyzes the condensation of ATP and 5-phosphoribose 1-diphosphate to form N'-(5'-phosphoribosyl)-ATP (PR-ATP). Has a crucial role in the pathway because the rate of histidine biosynthesis seems to be controlled primarily by regulation of HisG enzymatic activity. This chain is ATP phosphoribosyltransferase, found in Cupriavidus necator (strain ATCC 17699 / DSM 428 / KCTC 22496 / NCIMB 10442 / H16 / Stanier 337) (Ralstonia eutropha).